The following is a 150-amino-acid chain: Arginine repressor (150 aa).

It belongs to the ArgR family.

It is found in the cytoplasm. It participates in amino-acid biosynthesis; L-arginine biosynthesis [regulation]. Functionally, regulates arginine biosynthesis genes. The sequence is that of Arginine repressor from Halothermothrix orenii (strain H 168 / OCM 544 / DSM 9562).